Here is a 252-residue protein sequence, read N- to C-terminus: Trans-aconitate 2-methyltransferase (252 aa).

The protein belongs to the methyltransferase superfamily. Tam family.

Its subcellular location is the cytoplasm. The enzyme catalyses trans-aconitate + S-adenosyl-L-methionine = (E)-3-(methoxycarbonyl)pent-2-enedioate + S-adenosyl-L-homocysteine. In terms of biological role, catalyzes the S-adenosylmethionine monomethyl esterification of trans-aconitate. The sequence is that of Trans-aconitate 2-methyltransferase from Escherichia coli O6:H1 (strain CFT073 / ATCC 700928 / UPEC).